The sequence spans 440 residues: Gamma-aminobutyric acid receptor subunit pi (440 aa).

The first 23 residues, 1 to 23, serve as a signal peptide directing secretion; it reads MSYSLYLAFVCLNLLAQRMCIQG. Residues 24–241 lie on the Extracellular side of the membrane; the sequence is NQFNVEVSRS…LVLQFELRRN (218 aa). Asparagine 43, asparagine 102, and asparagine 145 each carry an N-linked (GlcNAc...) asparagine glycan. Residues cysteine 160 and cysteine 174 are joined by a disulfide bond. N-linked (GlcNAc...) asparagine glycosylation is found at asparagine 196 and asparagine 228. A helical membrane pass occupies residues 242–262; sequence VLYFILETYVPSTFLVVLSWV. Residues 263–270 lie on the Cytoplasmic side of the membrane; that stretch reads SFWISLES. The chain crosses the membrane as a helical span at residues 271–290; that stretch reads VPARTCIGVTTVLSMTTLMI. Residues 291 to 301 are Extracellular-facing; that stretch reads GSRTSLPNTNC. The chain crosses the membrane as a helical span at residues 302–322; the sequence is FIKAIDVYLGICFSFVFGALL. Residues 323-419 lie on the Cytoplasmic side of the membrane; it reads EYAVAHYSSL…NPSNVDRYSK (97 aa). The helical transmembrane segment at 420-440 threads the bilayer; sequence LLFPLIFMLANVFYWAYYMYF.

Belongs to the ligand-gated ion channel (TC 1.A.9) family. Gamma-aminobutyric acid receptor (TC 1.A.9.5) subfamily. GABRP sub-subfamily. Heteropentamer, formed by a combination of alpha (GABRA1-6), beta (GABRB1-3), gamma (GABRG1-3), delta (GABRD), epsilon (GABRE), rho (GABRR1-3), pi (GABRP) and theta (GABRQ) chains, each subunit exhibiting distinct physiological and pharmacological properties. As to expression, expressed in lungs, in alveolar epithelium.

The protein localises to the cell membrane. The protein resides in the apical cell membrane. It carries out the reaction chloride(in) = chloride(out). Its function is as follows. Pi subunit of the heteropentameric ligand-gated chloride channel gated by gamma-aminobutyric acid (GABA). GABA-gated chloride channels, also named GABA(A) receptors (GABAAR), consist of five subunits arranged around a central pore and contain GABA active binding site(s) located at the alpha and beta subunit interfaces. When activated by GABA, GABAARs selectively allow the flow of chloride anions across the cell membrane down their electrochemical gradient. Pi-containing GABAARs are mostly located in peripheral tissues. In the uterus, pi subunits modulate uterus contraction by altering the sensitivity of GABAARs to pregnanolone. In the lungs, pi-containing GABAARs contribute to pulmonary fluid transport via luminal secretion of chloride. The chain is Gamma-aminobutyric acid receptor subunit pi from Rattus norvegicus (Rat).